The chain runs to 165 residues: Putative BTB/POZ domain-containing protein At2g40440 (165 aa).

The 75-residue stretch at 24 to 98 (VDVRLKAGDS…IYSDGSMLSA (75 aa)) folds into the BTB domain.

The protein operates within protein modification; protein ubiquitination. In terms of biological role, may act as a substrate-specific adapter of an E3 ubiquitin-protein ligase complex (CUL3-RBX1-BTB) which mediates the ubiquitination and subsequent proteasomal degradation of target proteins. This is Putative BTB/POZ domain-containing protein At2g40440 from Arabidopsis thaliana (Mouse-ear cress).